A 123-amino-acid polypeptide reads, in one-letter code: Neuropeptide-like peptides nlp-40 (123 aa).

An N-terminal signal peptide occupies residues 1 to 17 (MKLVILLSFVATVAVFA). 3 propeptides span residues 30 to 31 (RA), 66 to 67 (KR), and 75 to 76 (KR).

As to expression, expressed in intestinal cells.

It is found in the secreted. The protein localises to the cytoplasmic vesicle. Neuropeptide ligand for the G-protein coupled receptor aex-2. Activates and regulates the rhythmic calcium influx in DVB GABergic neurons during the defecation motor program, which is a coordinated series of three muscle contractions that occurs every 45 seconds. In Caenorhabditis elegans, this protein is Neuropeptide-like peptides nlp-40.